A 315-amino-acid chain; its full sequence is Three-prime repair exonuclease 1 (315 aa).

Aspartate 18 and glutamate 20 together coordinate Mg(2+). 20–21 (EA) serves as a coordination point for substrate. Serine 78 bears the Phosphoserine mark. Tyrosine 129 provides a ligand contact to substrate. The residue at position 167 (serine 167) is a Phosphoserine. Histidine 195 functions as the Proton donor/acceptor in the catalytic mechanism. Aspartate 200 contacts Mg(2+). Position 200 (aspartate 200) interacts with substrate. Positions 236–315 (TTSTGTNPRP…YGLSLAMPGQ (80 aa)) are necessary for endoplasmic reticulum localization. The segment at 243-315 (PRPSAVTATV…YGLSLAMPGQ (73 aa)) is interaction with UBQLN1. A disordered region spans residues 256–282 (RASDTGPNLRGDRSPKPAPSPKMCPGA). The span at 271–282 (KPAPSPKMCPGA) shows a compositional bias: pro residues. The interval 282–315 (APPGEGLLAPLGLLAFLTLAVAMLYGLSLAMPGQ) is necessary for cytoplasmic retention.

The protein belongs to the exonuclease superfamily. TREX family. As to quaternary structure, homodimer. Interacts (via proline-rich region) with TCERG1/CA150 (via the second WW domain). Component of the SET complex, composed of at least ANP32A, APEX1, HMGB2, NME1, SET and TREX1. Within this complex, directly interacts with SET; this interaction does not result in TREX1 inhibition. Also interacts with NME1, but only following translocation to the nucleus. Directly interacts with UBQLN1 (via ubiquitin-like domain); the interaction may control TREX1 subcellular location. The cofactor is Mg(2+). Ubiquitinated, but not targeted to proteasomal degradation. Ubiquitination may be important for interaction with UBQLN1.

The protein resides in the nucleus. It is found in the cytoplasm. The protein localises to the cytosol. It localises to the endoplasmic reticulum membrane. It carries out the reaction Exonucleolytic cleavage in the 3'- to 5'-direction to yield nucleoside 5'-phosphates.. Functionally, major cellular 3'-to-5' DNA exonuclease which digests single-stranded DNA (ssDNA) and double-stranded DNA (dsDNA) with mismatched 3' termini. Prevents cell-intrinsic initiation of autoimmunity. Acts by metabolizing DNA fragments from endogenous retroelements, including L1, LTR and SINE elements. Plays a key role in degradation of DNA fragments at cytosolic micronuclei arising from genome instability: its association with the endoplasmic reticulum membrane directs TREX1 to ruptured micronuclei, leading to micronuclear DNA degradation. Micronuclear DNA degradation is required to limit CGAS activation and subsequent inflammation. Unless degraded, these DNA fragments accumulate in the cytosol and activate the cGAS-STING innate immune signaling, leading to the production of type I interferon. Prevents chronic ATM-dependent checkpoint activation, by processing ssDNA polynucleotide species arising from the processing of aberrant DNA replication intermediates. Inefficiently degrades oxidized DNA, such as that generated upon antimicrobial reactive oxygen production or upon absorption of UV light. During GZMA-mediated cell death, contributes to DNA damage in concert with NME1. NME1 nicks one strand of DNA and TREX1 removes bases from the free 3' end to enhance DNA damage and prevent DNA end reannealing and rapid repair. The chain is Three-prime repair exonuclease 1 from Bos taurus (Bovine).